The chain runs to 508 residues: Anthranilate synthase component 1 (508 aa).

L-tryptophan contacts are provided by residues Ser49 and 282–284 (PYM). 317–318 (GT) serves as a coordination point for chorismate. Position 344 (Glu344) interacts with Mg(2+). Chorismate-binding positions include Tyr432, Arg452, 466-468 (GAG), and Gly468. Glu481 is a binding site for Mg(2+).

Belongs to the anthranilate synthase component I family. Heterotetramer consisting of two non-identical subunits: a beta subunit (TrpG) and a large alpha subunit (TrpE). It depends on Mg(2+) as a cofactor.

The enzyme catalyses chorismate + L-glutamine = anthranilate + pyruvate + L-glutamate + H(+). The protein operates within amino-acid biosynthesis; L-tryptophan biosynthesis; L-tryptophan from chorismate: step 1/5. Feedback inhibited by tryptophan. In terms of biological role, part of a heterotetrameric complex that catalyzes the two-step biosynthesis of anthranilate, an intermediate in the biosynthesis of L-tryptophan. In the first step, the glutamine-binding beta subunit (TrpG) of anthranilate synthase (AS) provides the glutamine amidotransferase activity which generates ammonia as a substrate that, along with chorismate, is used in the second step, catalyzed by the large alpha subunit of AS (TrpE) to produce anthranilate. In the absence of TrpG, TrpE can synthesize anthranilate directly from chorismate and high concentrations of ammonia. This is Anthranilate synthase component 1 (trpE) from Geobacillus stearothermophilus (Bacillus stearothermophilus).